Consider the following 93-residue polypeptide: AYKVTLKTPDGDITFDVEPGERLIDIASEKADLPLSCQAGACSTCLGKIVSGTVDQSEGSFLDDEQIEQGYVLTCIAIPESDVVIETHKEDEL.

In terms of domain architecture, 2Fe-2S ferredoxin-type spans Y2 to D91. Residues C37, C42, C45, and C75 each coordinate [2Fe-2S] cluster.

This sequence belongs to the 2Fe2S plant-type ferredoxin family. It depends on [2Fe-2S] cluster as a cofactor.

The protein localises to the plastid. It localises to the chloroplast. Ferredoxins are iron-sulfur proteins that transfer electrons in a wide variety of metabolic reactions. This is Ferredoxin-2 from Equisetum telmateia (Great horsetail).